The primary structure comprises 470 residues: uncharacterized protein (470 aa).

The HTH gntR-type domain maps to 1–69 (MTRYQHLATL…PRSGYFVAQR (69 aa)). N6-(pyridoxal phosphate)lysine is present on Lys-313.

In the C-terminal section; belongs to the class-I pyridoxal-phosphate-dependent aminotransferase family.

This is an uncharacterized protein from Escherichia coli (strain K12).